The chain runs to 506 residues: Serine/threonine-protein kinase RIO1 (506 aa).

The interval 22-52 (TASSSSDDEPEQAVVKQEKLEAGEQIEEQYD) is disordered. The 365-residue stretch at 142 to 506 (LNIDGCISTG…KKRAHRQHMK (365 aa)) folds into the Protein kinase domain. ATP is bound by residues 148-156 (ISTGKEANV), K169, and L241. The Proton acceptor role is filled by D285. An ATP-binding site is contributed by N290. Residues N290 and D302 each contribute to the Mg(2+) site. The active-site 4-aspartylphosphate intermediate is the D302. The segment at 418 to 506 (GDGFGEEHDD…KKRAHRQHMK (89 aa)) is disordered. A compositionally biased stretch (acidic residues) spans 424-435 (EHDDSDDNDDEE). Basic and acidic residues predominate over residues 454 to 490 (EKERKIAMHTRNREETAEERKERKAAVKEEKREQRKE). The segment covering 491–506 (KIPKHLKKRAHRQHMK) has biased composition (basic residues).

This sequence belongs to the protein kinase superfamily. RIO-type Ser/Thr kinase family. Mg(2+) serves as cofactor. As to expression, expressed in vulva and uterine cells, uterine seam cells (utse), spermatheca and in the nervous system including chemosensory neurons in the head, nerve ring neurons (RID/RIF), inhibitory motor neurons (DA/DD/VA/VD), mechanosensory neurons (ALML/PLML) and tail sensory neurons (DVA//PDA). Also expressed in intestine and pharynx (procorpus) and rectal valve and gland.

The protein resides in the cytoplasm. It carries out the reaction L-seryl-[protein] + ATP = O-phospho-L-seryl-[protein] + ADP + H(+). The enzyme catalyses L-threonyl-[protein] + ATP = O-phospho-L-threonyl-[protein] + ADP + H(+). Its function is as follows. Involved in the final steps of cytoplasmic maturation of the 40S ribosomal subunit. Despite the protein kinase domain is proposed to act predominantly as an ATPase. The catalytic activity regulates its dynamic association with the 40S subunit. Plays a role in oogenesis by regulating germ cell proliferation, progression through diplotene and diakinesis stages and oocyte maturation. Regulates germline development probably by regulating the phosphorylation of mpk-1. Involved in larval development. This chain is Serine/threonine-protein kinase RIO1, found in Caenorhabditis elegans.